The primary structure comprises 81 residues: Probable small nuclear ribonucleoprotein G (81 aa).

In terms of domain architecture, Sm spans 5–76 (GQPPALKKYM…VVTVEALEPV (72 aa)).

The protein belongs to the snRNP Sm proteins family.

It is found in the nucleus. Probable common Sm protein, is found in U1 and U2 snRNPs and may be part of the spliceosome. The polypeptide is Probable small nuclear ribonucleoprotein G (C29) (Medicago sativa (Alfalfa)).